Here is a 206-residue protein sequence, read N- to C-terminus: Guanylate kinase (206 aa).

Positions 6–184 (GILFILSGPS…AVDKVKTIIK (179 aa)) constitute a Guanylate kinase-like domain. An ATP-binding site is contributed by 13–20 (GPSGVGKG).

Belongs to the guanylate kinase family.

Its subcellular location is the cytoplasm. The catalysed reaction is GMP + ATP = GDP + ADP. Its function is as follows. Essential for recycling GMP and indirectly, cGMP. The sequence is that of Guanylate kinase from Oceanobacillus iheyensis (strain DSM 14371 / CIP 107618 / JCM 11309 / KCTC 3954 / HTE831).